The primary structure comprises 158 residues: Large ribosomal subunit protein uL11 (158 aa).

It belongs to the universal ribosomal protein uL11 family. In terms of assembly, part of the ribosomal stalk of the 50S ribosomal subunit. Interacts with L10 and the large rRNA to form the base of the stalk. L10 forms an elongated spine to which L12 dimers bind in a sequential fashion forming a multimeric L10(L12)X complex.

Forms part of the ribosomal stalk which helps the ribosome interact with GTP-bound translation factors. This Methanoculleus marisnigri (strain ATCC 35101 / DSM 1498 / JR1) protein is Large ribosomal subunit protein uL11.